A 51-amino-acid polypeptide reads, in one-letter code: uncharacterized protein (51 aa).

This sequence to E.coli YdaF.

This is an uncharacterized protein from Escherichia coli O157:H7.